We begin with the raw amino-acid sequence, 642 residues long: Threonine--tRNA ligase (642 aa).

Residues 1–61 form the TGS domain; it reads MPVITLPDGS…ENDTQLSIIT (61 aa). Residues 243 to 534 are catalytic; that stretch reads DHRKIGKQLD…LTEEFAGFFP (292 aa). Position 286 is an N6-acetyllysine (Lys-286). Zn(2+)-binding residues include Cys-334, His-385, and His-511.

This sequence belongs to the class-II aminoacyl-tRNA synthetase family. In terms of assembly, homodimer. Requires Zn(2+) as cofactor.

It localises to the cytoplasm. It carries out the reaction tRNA(Thr) + L-threonine + ATP = L-threonyl-tRNA(Thr) + AMP + diphosphate + H(+). Catalyzes the attachment of threonine to tRNA(Thr) in a two-step reaction: L-threonine is first activated by ATP to form Thr-AMP and then transferred to the acceptor end of tRNA(Thr). Also edits incorrectly charged L-seryl-tRNA(Thr). This Shigella dysenteriae serotype 1 (strain Sd197) protein is Threonine--tRNA ligase.